Reading from the N-terminus, the 433-residue chain is Alpha-(1,3)-fucosyltransferase 4 (433 aa).

Topologically, residues Met-1–Arg-52 are cytoplasmic. A helical; Signal-anchor for type II membrane protein transmembrane segment spans residues Ser-53–Gly-74. Over Gln-75–Arg-433 the chain is Lumenal. 2 N-linked (GlcNAc...) asparagine glycosylation sites follow: Asn-117 and Asn-218.

The protein belongs to the glycosyltransferase 10 family. Highest expression in stomach and colon. It is also expressed in the lung, testis, uterus, small intestine and to a lesser extent in spleen, and ovary. Present in trace amounts in brain, thymus, heart, smooth muscle, kidney and bone marrow. Not found in liver, salivary gland and pancreas.

The protein localises to the golgi apparatus. It localises to the golgi stack membrane. It catalyses the reaction a beta-D-galactosyl-(1-&gt;4)-N-acetyl-beta-D-glucosaminyl derivative + GDP-beta-L-fucose = a beta-D-galactosyl-(1-&gt;4)-[alpha-L-fucosyl-(1-&gt;3)]-N-acetyl-beta-D-glucosaminyl derivative + GDP + H(+). The catalysed reaction is an N-acetyl-alpha-neuraminyl-(2-&gt;3)-beta-D-galactosyl-(1-&gt;4)-N-acetyl-beta-D-glucosaminyl derivative + GDP-beta-L-fucose = an alpha-Neu5Ac-(2-&gt;3)-beta-D-Gal-(1-&gt;4)-[alpha-L-Fuc-(1-&gt;3)]-beta-D-GlcNAc derivative + GDP + H(+). It carries out the reaction an alpha-Neu5Ac-(2-&gt;3)-beta-D-Gal-(1-&gt;4)-beta-D-GlcNAc-(1-&gt;3)-beta-D-Gal-(1-&gt;4)-beta-D-GlcNAc derivative + GDP-beta-L-fucose = an alpha-Neu5Ac-(2-&gt;3)-beta-D-Gal-(1-&gt;4)-beta-D-GlcNAc-(1-&gt;3)-beta-D-Gal-(1-&gt;4)-[alpha-L-Fuc-(1-&gt;3)]-beta-D-GlcNAc derivative + GDP + H(+). The enzyme catalyses an alpha-Neu5Ac-(2-&gt;3)-beta-D-Gal-(1-&gt;4)-beta-D-GlcNAc6S derivative + GDP-beta-L-fucose = an alpha-Neu5Ac-(2-&gt;3)-beta-D-Gal-(1-&gt;4)-[alpha-L-Fuc-(1-&gt;3)]-beta-D-GlcNAc6S derivative + GDP + H(+). Its pathway is protein modification; protein glycosylation. Functionally, catalyzes alpha(1-&gt;3) linkage of fucosyl moiety transferred from GDP-beta-L-fucose to N-acetyl glucosamine (GlcNAc) within type 2 lactosamine (LacNAc, Gal-beta(1-&gt;4)GlcNAc) glycan attached to N- or O-linked glycoproteins. Robustly fucosylates nonsialylated distal LacNAc unit of the polylactosamine chain to form Lewis X antigen (CD15), a glycan determinant known to mediate important cellular functions in development and immunity. Fucosylates with lower efficiency sialylated LacNAc acceptors to form sialyl Lewis X and 6-sulfo sialyl Lewis X determinants that serve as recognition epitopes for C-type lectins. Together with FUT7 contributes to SELE, SELL and SELP selectin ligand biosynthesis and selectin-dependent lymphocyte homing, leukocyte migration and blood leukocyte homeostasis. In a cell type specific manner, may also fucosylate the internal LacNAc unit of the polylactosamine chain to form VIM-2 antigen that serves as recognition epitope for SELE. This Mus musculus (Mouse) protein is Alpha-(1,3)-fucosyltransferase 4 (Fut4).